The primary structure comprises 511 residues: MAAALTDMADLEELSRLSPLPPGSPGPAARGRAEPPEEEEEEDEEEEAEAEAVAALLLNGGGGGGGVGGGEAETMSEPSPESASQAGEDDDEEEDDDEEEEDESSSGGGEEESSAESLVGSSSGGSSSDETRSLSPGAASSSSGDGDGKEGLEEPKGPRGSQGGGGGGSSSSSVVSSGGDEGYGTGGGGSSATSGGRRGSLEMSSDGEPLSRMDSEDSISSTIMDVDSTISSGRSTPAMMNGQGSTTSSSKNIAYNCCWDQCQACFTSSPDLADHIRSIHVDGQRGGVFVCLWKGCKVYNTPSTSQSWLQRHMLTHSGDKPFKCVVGGCNASFASQGGLARHVPTHFSQQNSSKVSSQPKAKEESPSKAGMNKRRKLKNKRRRSLPRPHDFFDAQTLDAIRHRAICFNLSAHIESLGKGHSVVFHSTVIAKRKEDSGKIKLLLHWMPEDILPDVWVNESERHQLKTKVVHLSKLPKDTALLLDPNIYRTMPQKRLKRTLIRKVFNLYLSKQ.

Residues 1-223 (MAAALTDMAD…DSEDSISSTI (223 aa)) are disordered. Residue alanine 2 is modified to N-acetylalanine. Phosphoserine is present on residues serine 18 and serine 24. Acidic residues predominate over residues 36–50 (PEEEEEEDEEEEAEA). Residues 59 to 71 (NGGGGGGGVGGGE) are compositionally biased toward gly residues. Residues 87–114 (GEDDDEEEDDDEEEEDESSSGGGEEESS) show a composition bias toward acidic residues. Positions 115 to 144 (AESLVGSSSGGSSSDETRSLSPGAASSSSG) are enriched in low complexity. Position 135 is a phosphoserine (serine 135). Positions 146 to 157 (GDGKEGLEEPKG) are enriched in basic and acidic residues. 2 stretches are compositionally biased toward gly residues: residues 160-169 (GSQGGGGGGS) and 179-190 (GDEGYGTGGGGS). Phosphoserine is present on residues serine 200, serine 204, and serine 205. The interval 203 to 288 (MSSDGEPLSR…IHVDGQRGGV (86 aa)) is interaction with RBBP4. The segment at 255–280 (YNCCWDQCQACFTSSPDLADHIRSIH) adopts a C2H2-type 1 zinc-finger fold. A C2H2-type 2; degenerate zinc finger spans residues 294–316 (KGCKVYNTPSTSQSWLQRHMLTH). The segment at 322-346 (FKCVVGGCNASFASQGGLARHVPTH) adopts a C2H2-type 3 zinc-finger fold. Positions 346–359 (HFSQQNSSKVSSQP) are enriched in polar residues. Residues 346–388 (HFSQQNSSKVSSQPKAKEESPSKAGMNKRRKLKNKRRRSLPRP) form a disordered region. Over residues 371-386 (MNKRRKLKNKRRRSLP) the composition is skewed to basic residues. A Phosphoserine modification is found at serine 384. Residues 401–472 (RHRAICFNLS…QLKTKVVHLS (72 aa)) form an interaction with SUZ12 region. An important for nucleosome binding activity of the PRC2 complex region spans residues 489–511 (TMPQKRLKRTLIRKVFNLYLSKQ).

This sequence belongs to the AEBP2/jing C2H2-type zinc-finger family. Self-associates. Associates with the PRC2 complex, which consists of the core components EED, EZH1 or EZH2, SUZ12, and RBBP4, and various combinations of accessory subunits including AEBP2, JARID2, PHF19, MTF2 and EPOP. Found in a monomeric PRC2.2 (class 2) complex consisting of at least SUZ12, RBBP4, AEBP2 and JARID2. Within the PRC2 complex, interacts directly with SUZ12; competes with PHF19 for SUZ12 binding. Interacts with EED, EZH2, and RBBP4. May also interact with RBBP7.

It localises to the nucleus. Acts as an accessory subunit for the core Polycomb repressive complex 2 (PRC2), which mediates histone H3K27 (H3K27me3) trimethylation on chromatin leading to transcriptional repression of the affected target gene. Plays a role in nucleosome localization of the PRC2 complex. This Bos taurus (Bovine) protein is Zinc finger protein AEBP2 (AEBP2).